Reading from the N-terminus, the 92-residue chain is MSTSDFEERVVTVPLRDANDKPIQERADFAMKIVREHLAQHFSVDEAEVVLDTTVNEAVWANGRQNPPSKVRVRAARFVEDGEPVVEAEYAE.

Belongs to the eukaryotic ribosomal protein eL31 family.

In Halorubrum lacusprofundi (strain ATCC 49239 / DSM 5036 / JCM 8891 / ACAM 34), this protein is Large ribosomal subunit protein eL31.